The sequence spans 182 residues: Envelope glycoprotein L (182 aa).

Residues 1 to 39 form the signal peptide; sequence MRRSAARGRAVSSTQTAMGAGAAIAVWAAALIALYSSCA. In terms of domain architecture, gL alphaherpesvirus-type spans 52–182; the sequence is ANASDTIGRL…RPEKTAPGGV (131 aa). Cysteines 73 and 109 form a disulfide.

The protein belongs to the herpesviridae glycoprotein L (gL) family. Alphaherpesvirinae gL subfamily. Interacts with glycoprotein H (gH); this interaction is necessary for the correct processing and cell surface expression of gH. The heterodimer gH/gL seems to interact with gB trimers during fusion. Post-translationally, O-glycosylated, and sialylated.

It localises to the virion membrane. The protein resides in the host cell membrane. Its subcellular location is the host Golgi apparatus. The protein localises to the host trans-Golgi network. Functionally, the heterodimer glycoprotein H-glycoprotein L is required for the fusion of viral and plasma membranes leading to virus entry into the host cell. Acts as a functional inhibitor of gH and maintains gH in an inhibited form. Upon binding to host integrins, gL dissociates from gH leading to activation of the viral fusion glycoproteins gB and gH. The chain is Envelope glycoprotein L from Amazona oratrix (yellow-headed parrot).